The following is a 321-amino-acid chain: D-alanine--D-alanine ligase (321 aa).

Positions 121 to 315 constitute an ATP-grasp domain; it reads RIWFLTNNIN…FTNLIEEIIK (195 aa). 147 to 199 contacts ATP; sequence PMKRPYVIKPLTQGSSIGVEVIFAEDDFNFADYDFPYGDQVIIEQYIKGRELQ. Mg(2+) is bound by residues E268, E282, and N284.

This sequence belongs to the D-alanine--D-alanine ligase family. The cofactor is Mg(2+). Mn(2+) is required as a cofactor.

The protein resides in the cytoplasm. The enzyme catalyses 2 D-alanine + ATP = D-alanyl-D-alanine + ADP + phosphate + H(+). It functions in the pathway cell wall biogenesis; peptidoglycan biosynthesis. Cell wall formation. The protein is D-alanine--D-alanine ligase of Rickettsia rickettsii (strain Iowa).